We begin with the raw amino-acid sequence, 118 residues long: Large ribosomal subunit protein uL18 (118 aa).

This sequence belongs to the universal ribosomal protein uL18 family. Part of the 50S ribosomal subunit; part of the 5S rRNA/L5/L18/L25 subcomplex. Contacts the 5S and 23S rRNAs.

Functionally, this is one of the proteins that bind and probably mediate the attachment of the 5S RNA into the large ribosomal subunit, where it forms part of the central protuberance. This is Large ribosomal subunit protein uL18 from Limosilactobacillus reuteri (strain DSM 20016) (Lactobacillus reuteri).